Here is a 132-residue protein sequence, read N- to C-terminus: Ribosome-binding factor A (132 aa).

Belongs to the RbfA family. Monomer. Binds 30S ribosomal subunits, but not 50S ribosomal subunits or 70S ribosomes.

The protein localises to the cytoplasm. Functionally, one of several proteins that assist in the late maturation steps of the functional core of the 30S ribosomal subunit. Associates with free 30S ribosomal subunits (but not with 30S subunits that are part of 70S ribosomes or polysomes). Required for efficient processing of 16S rRNA. May interact with the 5'-terminal helix region of 16S rRNA. This is Ribosome-binding factor A from Pectobacterium carotovorum subsp. carotovorum (strain PC1).